A 357-amino-acid polypeptide reads, in one-letter code: Peptide chain release factor 1 (357 aa).

The residue at position 234 (Q234) is an N5-methylglutamine.

The protein belongs to the prokaryotic/mitochondrial release factor family. In terms of processing, methylated by PrmC. Methylation increases the termination efficiency of RF1.

It localises to the cytoplasm. Its function is as follows. Peptide chain release factor 1 directs the termination of translation in response to the peptide chain termination codons UAG and UAA. The chain is Peptide chain release factor 1 from Lactococcus lactis subsp. cremoris (strain SK11).